A 420-amino-acid polypeptide reads, in one-letter code: Exodeoxyribonuclease 7 large subunit (420 aa).

The protein belongs to the XseA family. As to quaternary structure, heterooligomer composed of large and small subunits.

It is found in the cytoplasm. The catalysed reaction is Exonucleolytic cleavage in either 5'- to 3'- or 3'- to 5'-direction to yield nucleoside 5'-phosphates.. Its function is as follows. Bidirectionally degrades single-stranded DNA into large acid-insoluble oligonucleotides, which are then degraded further into small acid-soluble oligonucleotides. The chain is Exodeoxyribonuclease 7 large subunit from Helicobacter acinonychis (strain Sheeba).